The sequence spans 952 residues: Glutamate receptor 2.7 (952 aa).

The first 32 residues, 1–32, serve as a signal peptide directing secretion; it reads MKVMNPRKTNNTFMYYFVLFVCGFVLMEGCLG. Topologically, residues 33-582 are extracellular; the sequence is QNQTTEIKVG…NTWVFLRPWS (550 aa). Residues Asn34, Asn60, Asn355, Asn428, and Asn546 are each glycosylated (N-linked (GlcNAc...) asparagine). Residues 583-603 form a helical membrane-spanning segment; the sequence is LDLWVTTACFFVFIGFIVWIL. Residues 604-612 lie on the Cytoplasmic side of the membrane; that stretch reads EHRVNTDFR. A helical transmembrane segment spans residues 613-633; the sequence is GPPHHQIGTSFWFAFSTMNFA. Residues 634–637 are Cytoplasmic-facing; sequence HREK. Residues 638-658 form a helical membrane-spanning segment; it reads VVSNLARFVVLVWCFVVLVLI. The Extracellular segment spans residues 659 to 821; the sequence is QSYTANLTSF…LSSNHLSLSS (163 aa). N-linked (GlcNAc...) asparagine glycans are attached at residues Asn664, Asn728, Asn748, Asn784, and Asn809. The chain crosses the membrane as a helical span at residues 822-842; that stretch reads FWGLFLIAGIASFLALLIFVA. Topologically, residues 843-952 are cytoplasmic; sequence NFLYEHKHTL…ESAIIQCEGE (110 aa). Residues 889–908 show a composition bias toward polar residues; the sequence is VSSPITQGSSSPLTDQSTPL. Disordered regions lie at residues 889 to 914 and 932 to 952; these read VSSPITQGSSSPLTDQSTPLPRSPEQ and FTTQSEQVEDEESAIIQCEGE.

It belongs to the glutamate-gated ion channel (TC 1.A.10.1) family. May form heteromers. As to expression, expressed predominantly in leaves.

It is found in the membrane. Glutamate-gated receptor that probably acts as a non-selective cation channel. May be involved in light-signal transduction and calcium homeostasis via the regulation of calcium influx into cells. This chain is Glutamate receptor 2.7 (GLR2.7), found in Arabidopsis thaliana (Mouse-ear cress).